Here is a 1071-residue protein sequence, read N- to C-terminus: Kinesin-like protein KIN-14J (1071 aa).

Positions 39–142 constitute a Calponin-homology (CH) domain; that stretch reads KKGHQSLVEW…SLKALKASFS (104 aa). Residues 157–181 form a disordered region; the sequence is WSLPEDHSDSRGDDRNFTDGFQSKE. Positions 158-173 are enriched in basic and acidic residues; sequence SLPEDHSDSRGDDRNF. The stretch at 299–389 forms a coiled coil; the sequence is EKTRIEEKER…ELEKLCQSKS (91 aa). The region spanning 472–800 is the Kinesin motor domain; the sequence is NIRVYCRIRP…LKFAERVSGV (329 aa). 556–563 provides a ligand contact to ATP; it reads GQTGSGKT. A coiled-coil region spans residues 811–844; it reads GRDVRQLMEQVSNLKDVIAKKDEELQNFQKVKGN. 2 disordered regions span residues 852–931 and 995–1071; these read GLSN…AAKG and ARMT…NRRR. Basic and acidic residues-rich tracts occupy residues 910-921 and 995-1017; these read SDERKHQKDYHQ and ARMTSEKLEKSVKMGKTEPKDRT. Polar residues predominate over residues 1034 to 1049; it reads TRPSRLSIATSSSSKA.

It belongs to the TRAFAC class myosin-kinesin ATPase superfamily. Kinesin family. KIN-14 subfamily.

This is Kinesin-like protein KIN-14J from Arabidopsis thaliana (Mouse-ear cress).